Here is a 987-residue protein sequence, read N- to C-terminus: Ephrin type-B receptor 4 (987 aa).

Positions 1-15 are cleaved as a signal peptide; it reads MELRALLCWASLATA. The Extracellular portion of the chain corresponds to 16–539; it reads LEETLLNTKL…ESESWREQLA (524 aa). One can recognise an Eph LBD domain in the interval 17-202; sequence EETLLNTKLE…FYKKCSWLIT (186 aa). 2 cysteine pairs are disulfide-bonded: cysteine 61–cysteine 184 and cysteine 97–cysteine 107. 3 N-linked (GlcNAc...) asparagine glycosylation sites follow: asparagine 203, asparagine 335, and asparagine 426. 2 Fibronectin type-III domains span residues 323-432 and 436-529; these read PPSA…TDRE and AVSD…TQLD. Residues 540 to 560 traverse the membrane as a helical segment; that stretch reads LIAGTAVVGVVLVLVVVIIAV. The Cytoplasmic portion of the chain corresponds to 561–987; the sequence is LCLRKQSNGR…GGTGGPAQQF (427 aa). In terms of domain architecture, Protein kinase spans 615 to 899; that stretch reads VKIEEVIGAG…ENGGASHPLL (285 aa). Residues 621–629 and lysine 647 each bind ATP; that span reads IGAGEFGEV. Aspartate 740 acts as the Proton acceptor in catalysis. 4 positions are modified to phosphoserine: serine 769, serine 770, serine 911, and serine 943. Positions 907–971 constitute an SAM domain; that stretch reads SAFGSVGEWL…LASVQHMKSQ (65 aa). Residues 965 to 987 form a disordered region; sequence VQHMKSQAKPGAPGGTGGPAQQF. Over residues 976–987 the composition is skewed to gly residues; that stretch reads APGGTGGPAQQF. A PDZ-binding motif is present at residues 985–987; that stretch reads QQF.

Belongs to the protein kinase superfamily. Tyr protein kinase family. Ephrin receptor subfamily. In terms of assembly, heterotetramer upon binding of the ligand. The heterotetramer is composed of an ephrin dimer and a receptor dimer. Oligomerization is probably required to induce biological responses. Interacts with RASA1; the interaction depends on EPHB4 tyrosine-phosphorylation. Phosphorylated; autophosphorylation is stimulated by EFNB2. Expressed in various organ systems, including lung, liver, kidney, intestine, muscle and heart. Expressed in myogenic progenitor cells.

Its subcellular location is the cell membrane. The enzyme catalyses L-tyrosyl-[protein] + ATP = O-phospho-L-tyrosyl-[protein] + ADP + H(+). Its function is as follows. Receptor tyrosine kinase which binds promiscuously transmembrane ephrin-B family ligands residing on adjacent cells, leading to contact-dependent bidirectional signaling into neighboring cells. The signaling pathway downstream of the receptor is referred to as forward signaling while the signaling pathway downstream of the ephrin ligand is referred to as reverse signaling. Together with its cognate ligand/functional ligand EFNB2 it is involved in the regulation of cell adhesion and migration, and plays a central role in heart morphogenesis, angiogenesis and blood vessel remodeling and permeability. EPHB4-mediated forward signaling controls cellular repulsion and segregation from EFNB2-expressing cells. This Mus musculus (Mouse) protein is Ephrin type-B receptor 4 (Ephb4).